We begin with the raw amino-acid sequence, 406 residues long: MAASAPPPPDKLEGGGGPAPPPAPPSTGRKQGKAGLQMKSPEKKRRKSNTQGPAYSHLTEFAPPPTPMVDHLVASNPFEDDFGAPKVGVAAPPFLGSPVPFGGFRVQGGMAGQVPPGYSTGGGGGPQPLRRQPPPFPPNPMGPAFNMPPQGPGYPPPGNMNFPSQPFNQPLGQNFSPPSGQMMPGPVGGFGPMISPTMGQPPRAELGPPSLSQRFAQPGAPFGPSPLQRPGQGLPSLPPNTSPFPGPDPGFPGPGGEDGGKPLNPPASTAFPQEPHSGSPAAAVNGNQPSFPPNSSGRGGGTPDANSLAPPGKAGGGSGPQPPPGLVYPCGACRSEVNDDQDAILCEASCQKWFHRECTGMTESAYGLLTTEASAVWACDLCLKTKEIQSVYIREGMGQLVAANDG.

2 disordered regions span residues 1–73 (MAAS…DHLV) and 106–323 (VQGG…PQPP). Alanine 2 carries the N-acetylalanine modification. Position 40 is a phosphoserine (serine 40). The Nuclear localization signal signature appears at 41 to 47 (PEKKRRK). Composition is skewed to pro residues over residues 131-141 (RQPPPFPPNPM) and 149-158 (PQGPGYPPPG). A compositionally biased stretch (polar residues) spans 164–179 (SQPFNQPLGQNFSPPS). The span at 236 to 252 (SLPPNTSPFPGPDPGFP) shows a compositional bias: pro residues. The segment covering 285-296 (NGNQPSFPPNSS) has biased composition (polar residues). At threonine 302 the chain carries Phosphothreonine. The PHD-type zinc finger occupies 327–385 (VYPCGACRSEVNDDQDAILCEASCQKWFHRECTGMTESAYGLLTTEASAVWACDLCLKT).

In terms of assembly, binds to BCL9 via the PHD-type zinc finger motif, and thereby becomes part of the nuclear beta-catenin/TCF complex.

Its subcellular location is the nucleus. Functionally, involved in signal transduction through the Wnt pathway. This Homo sapiens (Human) protein is Pygopus homolog 2 (PYGO2).